Consider the following 432-residue polypeptide: Adenylosuccinate synthetase (432 aa).

GTP-binding positions include Gly-13–Lys-19 and Gly-41–Thr-43. Residue Asp-14 is the Proton acceptor of the active site. 2 residues coordinate Mg(2+): Asp-14 and Gly-41. Residues Asp-14–Lys-17, Asn-39–His-42, Thr-130, Arg-144, Gln-225, Thr-240, and Arg-304 contribute to the IMP site. His-42 functions as the Proton donor in the catalytic mechanism. Residue Ser-300–Arg-306 participates in substrate binding. GTP-binding positions include Arg-306, Lys-332–Asp-334, and Ser-415–Gly-417.

Belongs to the adenylosuccinate synthetase family. In terms of assembly, homodimer. It depends on Mg(2+) as a cofactor.

It is found in the cytoplasm. It catalyses the reaction IMP + L-aspartate + GTP = N(6)-(1,2-dicarboxyethyl)-AMP + GDP + phosphate + 2 H(+). It participates in purine metabolism; AMP biosynthesis via de novo pathway; AMP from IMP: step 1/2. In terms of biological role, plays an important role in the de novo pathway of purine nucleotide biosynthesis. Catalyzes the first committed step in the biosynthesis of AMP from IMP. The protein is Adenylosuccinate synthetase of Blochmanniella pennsylvanica (strain BPEN).